A 197-amino-acid polypeptide reads, in one-letter code: dTTP/UTP pyrophosphatase (197 aa).

D70 serves as the catalytic Proton acceptor.

The protein belongs to the Maf family. YhdE subfamily. The cofactor is a divalent metal cation.

Its subcellular location is the cytoplasm. The catalysed reaction is dTTP + H2O = dTMP + diphosphate + H(+). It carries out the reaction UTP + H2O = UMP + diphosphate + H(+). Its function is as follows. Nucleoside triphosphate pyrophosphatase that hydrolyzes dTTP and UTP. May have a dual role in cell division arrest and in preventing the incorporation of modified nucleotides into cellular nucleic acids. The polypeptide is dTTP/UTP pyrophosphatase (yceF2) (Shigella boydii serotype 4 (strain Sb227)).